Consider the following 80-residue polypeptide: FXYD domain-containing ion transport regulator 7 (80 aa).

The Extracellular portion of the chain corresponds to 1–22 (MATPTQSPTNVPEETDPFFYDY). 3 O-linked (GlcNAc) threonine glycosylation sites follow: Thr3, Thr5, and Thr9. The chain crosses the membrane as a helical span at residues 23–45 (ATVQTVGMTLATIMFVLGIIIIL). Residues 46–80 (SKKVKCRKADSRSESPTCKSCKSELPSSAPGGGGV) lie on the Cytoplasmic side of the membrane. The disordered stretch occupies residues 55–80 (DSRSESPTCKSCKSELPSSAPGGGGV). Ser73 bears the Phosphoserine mark.

It belongs to the FXYD family. Regulatory subunit of the sodium/potassium-transporting ATPase which is composed of a catalytic alpha subunit, a non-catalytic beta subunit and an additional regulatory subunit. The regulatory subunit, a member of the FXYD protein family, modulates the enzymatic activity in a tissue- and isoform-specific way by changing affinities of the Na+/K+-ATPase toward Na(+), K(+) or ATP. Post-translationally, O-glycosylated; required for stabilization and translocation to the plasma membrane.

It localises to the cell membrane. Functionally, associates with and regulates the activity of the sodium/potassium-transporting ATPase (NKA) which catalyzes the hydrolysis of ATP coupled with the exchange of Na(+) and K(+) ions across the plasma membrane. Reduces the apparent affinity for external K(+), an effect that depends on the presence of external Na(+) and voltage. Increases the apparent affinity for intracellular Na(+). The sequence is that of FXYD domain-containing ion transport regulator 7 (Fxyd7) from Mus musculus (Mouse).